A 595-amino-acid polypeptide reads, in one-letter code: Myb-like protein D (595 aa).

Disordered stretches follow at residues 1 to 47 (MQQQ…NGLV), 55 to 74 (QQYQ…DEGE), 82 to 266 (DESQ…NNRK), and 319 to 445 (VLQK…IWTQ). Over residues 19–47 (DNYNNNNSNINTNNNNSINDYENQNNGLV) the composition is skewed to low complexity. The span at 60-74 (DQNDSFDDDSMDEGE) shows a compositional bias: acidic residues. 2 stretches are compositionally biased toward low complexity: residues 90–212 (NNNN…ENNN) and 225–264 (NNNN…NNNN). The segment covering 324–348 (TLNRNRSRSRSRSNSRSHSRSRSRS) has biased composition (basic residues). 2 stretches are compositionally biased toward low complexity: residues 349 to 368 (RSLS…YSRS) and 376 to 420 (NNNN…NNNN). Over residues 423–434 (RKSEDDNQDDGK) the composition is skewed to basic and acidic residues. An HTH myb-type domain is found at 435–489 (KKHRKNAIWTQEEDEKMAQLYNKYGKSWKAIHSHFDDKTREQVQSHGQYLIRIGK). Positions 462–485 (WKAIHSHFDDKTREQVQSHGQYLI) form a DNA-binding region, H-T-H motif. Residues 494–595 (HRDGRKERRK…NSSNYVNNDN (102 aa)) are disordered. Low complexity predominate over residues 517–595 (QQNQQNNNNN…NSSNYVNNDN (79 aa)).

Its subcellular location is the nucleus. This Dictyostelium discoideum (Social amoeba) protein is Myb-like protein D (mybD).